The chain runs to 162 residues: Caveolin-2 (162 aa).

At 1 to 86 the chain is on the cytoplasmic side; the sequence is MGLETEKADV…FEISKYVMYK (86 aa). Tyrosine 19 is modified (phosphotyrosine; by SRC). 2 positions are modified to phosphoserine: serine 20 and serine 23. A Phosphotyrosine; by SRC modification is found at tyrosine 27. Serine 36 carries the phosphoserine modification. An intramembrane region (helical) is located at residues 87 to 107; the sequence is FLTVFLSIPLAFLAGILFATL. Over 108-162 the chain is Cytoplasmic; it reads SCLHIWIIMPFVKTCLMVLPSVQTIWKSVTDAIIAPLCTSIGRSFSSVSLQLSHD.

This sequence belongs to the caveolin family. In terms of assembly, monomer or homodimer. Interacts with CAV1; the interaction forms a stable heterooligomeric complex that is required for targeting to lipid rafts and for caveolae formation. Tyrosine phosphorylated forms do not form heterooligomers with the Tyr-19-phosphorylated form existing as a monomer or dimer, and the Tyr-27-form as a monomer only. Interacts (tyrosine phosphorylated form) with the SH2 domain-containing proteins, RASA1, NCK1 and SRC. Interacts (tyrosine phosphorylated form) with INSR, the interaction (Tyr-27-phosphorylated form) is increased on insulin stimulation. Interacts (Tyr-19 phosphorylated form) with MAPK1 (phosphorylated form); the interaction, promoted by insulin, leads to nuclear location and MAPK1 activation. Interacts with STAT3; the interaction is increased on insulin-induced tyrosine phosphorylation leading to STAT activation. In terms of processing, phosphorylated on serine and tyrosine residues. CAV1 promotes phosphorylation on Ser-23 which then targets the complex to the plasma membrane, lipid rafts and caveolae. Phosphorylation on Ser-36 appears to modulate mitosis in endothelial cells. Phosphorylation on both Tyr-19 and Tyr-27 is required for insulin-induced 'Ser-727' phosphorylation of STAT3 and its activation. Phosphorylation on Tyr-19 is required for insulin-induced phosphorylation of MAPK1 and DNA binding of STAT3. Tyrosine phosphorylation is induced by both EGF and insulin (By. similarity).

It is found in the nucleus. The protein resides in the cytoplasm. Its subcellular location is the golgi apparatus membrane. The protein localises to the cell membrane. It localises to the membrane. It is found in the caveola. In terms of biological role, may act as a scaffolding protein within caveolar membranes. Interacts directly with G-protein alpha subunits and can functionally regulate their activity. Acts as an accessory protein in conjunction with CAV1 in targeting to lipid rafts and driving caveolae formation. The Ser-36 phosphorylated form has a role in modulating mitosis in endothelial cells. Positive regulator of cellular mitogenesis of the MAPK signaling pathway. Required for the insulin-stimulated nuclear translocation and activation of MAPK1 and STAT3, and the subsequent regulation of cell cycle progression. This is Caveolin-2 (CAV2) from Saimiri boliviensis boliviensis (Bolivian squirrel monkey).